The following is a 278-amino-acid chain: Phosphatidylglycerol--prolipoprotein diacylglyceryl transferase (278 aa).

A run of 3 helical transmembrane segments spans residues 21–41 (WYGIIIAMGILLGYFIAQASV), 54–74 (IIFWSAIFGFIIARIYFVIFQ), and 88–108 (IWQGGIAIHGGLIGGFVTGII). Arg-136 is an a 1,2-diacyl-sn-glycero-3-phospho-(1'-sn-glycerol) binding site. A run of 3 helical transmembrane segments spans residues 176–196 (QPTFLYESIWDVLGFVILILL), 202–222 (IGDTFCLYLIWYSIGRFFVEG), and 234–254 (IRIAQLMSIILIIIGVVIMIV).

This sequence belongs to the Lgt family.

The protein resides in the cell membrane. The enzyme catalyses L-cysteinyl-[prolipoprotein] + a 1,2-diacyl-sn-glycero-3-phospho-(1'-sn-glycerol) = an S-1,2-diacyl-sn-glyceryl-L-cysteinyl-[prolipoprotein] + sn-glycerol 1-phosphate + H(+). The protein operates within protein modification; lipoprotein biosynthesis (diacylglyceryl transfer). Functionally, catalyzes the transfer of the diacylglyceryl group from phosphatidylglycerol to the sulfhydryl group of the N-terminal cysteine of a prolipoprotein, the first step in the formation of mature lipoproteins. This Staphylococcus saprophyticus subsp. saprophyticus (strain ATCC 15305 / DSM 20229 / NCIMB 8711 / NCTC 7292 / S-41) protein is Phosphatidylglycerol--prolipoprotein diacylglyceryl transferase.